Here is a 236-residue protein sequence, read N- to C-terminus: Phosphoribosylaminoimidazole-succinocarboxamide synthase (236 aa).

It belongs to the SAICAR synthetase family.

The catalysed reaction is 5-amino-1-(5-phospho-D-ribosyl)imidazole-4-carboxylate + L-aspartate + ATP = (2S)-2-[5-amino-1-(5-phospho-beta-D-ribosyl)imidazole-4-carboxamido]succinate + ADP + phosphate + 2 H(+). It participates in purine metabolism; IMP biosynthesis via de novo pathway; 5-amino-1-(5-phospho-D-ribosyl)imidazole-4-carboxamide from 5-amino-1-(5-phospho-D-ribosyl)imidazole-4-carboxylate: step 1/2. The chain is Phosphoribosylaminoimidazole-succinocarboxamide synthase from Pseudomonas aeruginosa (strain LESB58).